Here is a 320-residue protein sequence, read N- to C-terminus: Cytochrome f (320 aa).

The N-terminal stretch at 1–35 (MQTRNAFSYIKEEITRSISVLLVIYIIIRAPISNA) is a signal peptide. Residues tyrosine 36, cysteine 56, cysteine 59, and histidine 60 each coordinate heme. Residues 286 to 305 (VQGLLFFLASIIFAQIFLVL) form a helical membrane-spanning segment.

Belongs to the cytochrome f family. The 4 large subunits of the cytochrome b6-f complex are cytochrome b6, subunit IV (17 kDa polypeptide, petD), cytochrome f and the Rieske protein, while the 4 small subunits are PetG, PetL, PetM and PetN. The complex functions as a dimer. Heme serves as cofactor.

It localises to the plastid. It is found in the chloroplast thylakoid membrane. In terms of biological role, component of the cytochrome b6-f complex, which mediates electron transfer between photosystem II (PSII) and photosystem I (PSI), cyclic electron flow around PSI, and state transitions. This chain is Cytochrome f, found in Lotus japonicus (Lotus corniculatus var. japonicus).